The sequence spans 117 residues: Holo-[acyl-carrier-protein] synthase (117 aa).

Mg(2+) is bound by residues aspartate 6 and glutamate 55.

The protein belongs to the P-Pant transferase superfamily. AcpS family. The cofactor is Mg(2+).

Its subcellular location is the cytoplasm. It catalyses the reaction apo-[ACP] + CoA = holo-[ACP] + adenosine 3',5'-bisphosphate + H(+). In terms of biological role, transfers the 4'-phosphopantetheine moiety from coenzyme A to a Ser of acyl-carrier-protein. This is Holo-[acyl-carrier-protein] synthase from Chlorobaculum tepidum (strain ATCC 49652 / DSM 12025 / NBRC 103806 / TLS) (Chlorobium tepidum).